An 831-amino-acid polypeptide reads, in one-letter code: Periplasmic nitrate reductase (831 aa).

Positions 1–29 form a signal peptide, tat-type signal; it reads MKVSRRDFIKQTAIAATASVAGIPLGTEA. The 4Fe-4S Mo/W bis-MGD-type domain maps to 41–97; that stretch reads LKWSKAPCRFCGTGCGVTVAVRDNKVVATQGDPQCEVNKGLNCVKGYFLSKIMYGQD. Residues C48, C51, C55, and C83 each contribute to the [4Fe-4S] cluster site. Mo-bis(molybdopterin guanine dinucleotide)-binding positions include K85, Q152, N177, C181, 214–221, 245–249, 264–266, M375, Q379, N485, 511–512, K534, D561, and 721–730; these read WGSNMAEM, STFTH, QTD, SD, and TGRVLEHWHS. Residue W797 coordinates substrate. N805 and K822 together coordinate Mo-bis(molybdopterin guanine dinucleotide).

It belongs to the prokaryotic molybdopterin-containing oxidoreductase family. NasA/NapA/NarB subfamily. In terms of assembly, component of the periplasmic nitrate reductase NapAB complex composed of NapA and NapB. The cofactor is [4Fe-4S] cluster. It depends on Mo-bis(molybdopterin guanine dinucleotide) as a cofactor. Post-translationally, predicted to be exported by the Tat system. The position of the signal peptide cleavage has not been experimentally proven.

It localises to the periplasm. It catalyses the reaction 2 Fe(II)-[cytochrome] + nitrate + 2 H(+) = 2 Fe(III)-[cytochrome] + nitrite + H2O. In terms of biological role, catalytic subunit of the periplasmic nitrate reductase complex NapAB. Receives electrons from NapB and catalyzes the reduction of nitrate to nitrite. The sequence is that of Periplasmic nitrate reductase from Cupriavidus pinatubonensis (strain JMP 134 / LMG 1197) (Cupriavidus necator (strain JMP 134)).